An 878-amino-acid chain; its full sequence is Aminopeptidase M1-A (878 aa).

A required for membrane association region spans residues Val-105–Val-212. Substrate is bound by residues Glu-145 and Gly-278–Asn-282. Position 314 (His-314) interacts with Zn(2+). Glu-315 (proton acceptor) is an active-site residue. Residues His-318 and Glu-337 each coordinate Zn(2+). The Dileucine internalization motif motif lies at Leu-727–Leu-728.

This sequence belongs to the peptidase M1 family. As to quaternary structure, homodimer. Requires Zn(2+) as cofactor.

Its subcellular location is the membrane. It is found in the microsome membrane. The protein localises to the cytoplasm. It catalyses the reaction Release of an N-terminal amino acid, Xaa-|-Yaa- from a peptide, amide or arylamide. Xaa is preferably Ala, but may be most amino acids including Pro (slow action). When a terminal hydrophobic residue is followed by a prolyl residue, the two may be released as an intact Xaa-Pro dipeptide.. In Oryza sativa subsp. japonica (Rice), this protein is Aminopeptidase M1-A.